The chain runs to 131 residues: DNA-directed RNA polymerase subunit omega (131 aa).

The disordered stretch occupies residues 78 to 131 (DEPEAEAVPALSSAPDAAQSDAMGDVQFDRMTEEDLLRGLEGLVPPAATDDDGE). Residues 104-115 (QFDRMTEEDLLR) show a composition bias toward basic and acidic residues.

The protein belongs to the RNA polymerase subunit omega family. As to quaternary structure, the RNAP catalytic core consists of 2 alpha, 1 beta, 1 beta' and 1 omega subunit. When a sigma factor is associated with the core the holoenzyme is formed, which can initiate transcription.

It carries out the reaction RNA(n) + a ribonucleoside 5'-triphosphate = RNA(n+1) + diphosphate. Promotes RNA polymerase assembly. Latches the N- and C-terminal regions of the beta' subunit thereby facilitating its interaction with the beta and alpha subunits. This is DNA-directed RNA polymerase subunit omega from Beijerinckia indica subsp. indica (strain ATCC 9039 / DSM 1715 / NCIMB 8712).